A 318-amino-acid polypeptide reads, in one-letter code: NADH-ubiquinone oxidoreductase chain 1 (318 aa).

Helical transmembrane passes span 2–22, 68–88, 100–120, 146–166, 171–191, 222–242, 253–273, and 293–313; these read FMIN…FLTL, ISMF…MWTP, LGIL…LWSG, LAII…PTLI, HIWL…STLA, LFFL…TILF, ELYT…FLWV, and FLPL…ITAG.

It belongs to the complex I subunit 1 family. In terms of assembly, core subunit of respiratory chain NADH dehydrogenase (Complex I) which is composed of 45 different subunits.

It localises to the mitochondrion inner membrane. The catalysed reaction is a ubiquinone + NADH + 5 H(+)(in) = a ubiquinol + NAD(+) + 4 H(+)(out). In terms of biological role, core subunit of the mitochondrial membrane respiratory chain NADH dehydrogenase (Complex I) which catalyzes electron transfer from NADH through the respiratory chain, using ubiquinone as an electron acceptor. Essential for the catalytic activity and assembly of complex I. The chain is NADH-ubiquinone oxidoreductase chain 1 (MT-ND1) from Hipposideros armiger terasensis (Formosan leaf-nosed bat).